The sequence spans 392 residues: Succinyl-diaminopimelate desuccinylase (392 aa).

A Zn(2+)-binding site is contributed by His-71. The active site involves Asp-73. Asp-102 contributes to the Zn(2+) binding site. Glu-144 (proton acceptor) is an active-site residue. Zn(2+)-binding residues include Glu-145, Glu-173, and His-362.

It belongs to the peptidase M20A family. DapE subfamily. In terms of assembly, homodimer. The cofactor is Zn(2+). It depends on Co(2+) as a cofactor.

It carries out the reaction N-succinyl-(2S,6S)-2,6-diaminopimelate + H2O = (2S,6S)-2,6-diaminopimelate + succinate. The protein operates within amino-acid biosynthesis; L-lysine biosynthesis via DAP pathway; LL-2,6-diaminopimelate from (S)-tetrahydrodipicolinate (succinylase route): step 3/3. Its function is as follows. Catalyzes the hydrolysis of N-succinyl-L,L-diaminopimelic acid (SDAP), forming succinate and LL-2,6-diaminopimelate (DAP), an intermediate involved in the bacterial biosynthesis of lysine and meso-diaminopimelic acid, an essential component of bacterial cell walls. The polypeptide is Succinyl-diaminopimelate desuccinylase (Rhodospirillum rubrum (strain ATCC 11170 / ATH 1.1.1 / DSM 467 / LMG 4362 / NCIMB 8255 / S1)).